Here is a 211-residue protein sequence, read N- to C-terminus: Beta-crystallin B3 (211 aa).

Methionine 1 bears the N-acetylmethionine mark. Alanine 2 carries the N-acetylalanine; in Beta-crystallin B3, N-terminally processed modification. An N-terminal arm region spans residues alanine 2 to serine 23. 2 consecutive Beta/gamma crystallin 'Greek key' domains span residues tyrosine 24 to serine 63 and glycine 64 to histidine 108. The tract at residues isoleucine 109 to aspartate 113 is connecting peptide. Beta/gamma crystallin 'Greek key' domains lie at histidine 114–asparagine 155 and glycine 156–arginine 198. Residues glutamine 200–serine 211 are C-terminal arm.

Belongs to the beta/gamma-crystallin family. In terms of assembly, homo/heterodimer, or complexes of higher-order. The structure of beta-crystallin oligomers seems to be stabilized through interactions between the N-terminal arms.

Its function is as follows. Crystallins are the dominant structural components of the vertebrate eye lens. In Rattus norvegicus (Rat), this protein is Beta-crystallin B3 (Crybb3).